The following is a 339-amino-acid chain: Glycerol-3-phosphate dehydrogenase [NAD(P)+] (339 aa).

Residues Ser15, Tyr16, His36, and Lys110 each contribute to the NADPH site. Positions 110, 139, and 141 each coordinate sn-glycerol 3-phosphate. Ala143 is a binding site for NADPH. Sn-glycerol 3-phosphate contacts are provided by Lys195, Asp248, Ser258, Arg259, and Asn260. The active-site Proton acceptor is the Lys195. Arg259 lines the NADPH pocket. Positions 283 and 285 each coordinate NADPH.

Belongs to the NAD-dependent glycerol-3-phosphate dehydrogenase family.

Its subcellular location is the cytoplasm. The catalysed reaction is sn-glycerol 3-phosphate + NAD(+) = dihydroxyacetone phosphate + NADH + H(+). The enzyme catalyses sn-glycerol 3-phosphate + NADP(+) = dihydroxyacetone phosphate + NADPH + H(+). It functions in the pathway membrane lipid metabolism; glycerophospholipid metabolism. Catalyzes the reduction of the glycolytic intermediate dihydroxyacetone phosphate (DHAP) to sn-glycerol 3-phosphate (G3P), the key precursor for phospholipid synthesis. The sequence is that of Glycerol-3-phosphate dehydrogenase [NAD(P)+] from Shigella boydii serotype 18 (strain CDC 3083-94 / BS512).